The chain runs to 302 residues: MYRELISHKIAELKKERKAIILAHNYQLGEIQDAADFVGDSLELARKAAKVDAEVIVFCGVHFMAETAAILSPEKIVLAPEPRAGCPMADMISGAELREFKSRHPGLPVVCYVNSTAEVKAESDICCTSANAVKVVESLKSDTVLFVPDQYLGAFVKERTSKKIISWPGYCPSHARIKPEDIVNLKKHYPAAKVIVHPESRPEVTALADEVLSTGQMVSYAARADVKELIVGTEIGMIYRLRKENPDKLFIPVSEQAVCANMKMTTLPKLLASLENMQAVVSVPEEIRVKAVGAVERMLRVV.

Residues His24 and Ser41 each contribute to the iminosuccinate site. Cys86 is a binding site for [4Fe-4S] cluster. Residues 112-114 (YVN) and Ser129 contribute to the iminosuccinate site. Cys171 is a binding site for [4Fe-4S] cluster. Residues 197-199 (HPE) and Thr214 contribute to the iminosuccinate site. [4Fe-4S] cluster is bound at residue Cys259.

This sequence belongs to the quinolinate synthase family. Type 2 subfamily. The cofactor is [4Fe-4S] cluster.

Its subcellular location is the cytoplasm. It catalyses the reaction iminosuccinate + dihydroxyacetone phosphate = quinolinate + phosphate + 2 H2O + H(+). Its pathway is cofactor biosynthesis; NAD(+) biosynthesis; quinolinate from iminoaspartate: step 1/1. Functionally, catalyzes the condensation of iminoaspartate with dihydroxyacetone phosphate to form quinolinate. The polypeptide is Quinolinate synthase (Dehalococcoides mccartyi (strain CBDB1)).